We begin with the raw amino-acid sequence, 816 residues long: Probable E3 ubiquitin-protein ligase hulA (816 aa).

Positions 1–112 (MGSNLPAQPN…QMGGDEMLTR (112 aa)) constitute a C2 domain. 2 disordered regions span residues 134 to 238 (NLST…WERR) and 253 to 353 (RTTT…YFVD). Composition is skewed to polar residues over residues 151–168 (MQPS…ASTP), 177–202 (ADPT…STIV), 217–226 (SRTNLSSFED), and 253–270 (RTTT…QTSR). The 34-residue stretch at 229–262 (GRLPAGWERREDNLGRTYYVDHNTRTTTWTRPSN) folds into the WW 1 domain. Positions 279–294 (LERRAHQSRMLPEDRT) are enriched in basic and acidic residues. Positions 295–309 (GASSPNLQENQQQAQ) are enriched in polar residues. The segment covering 310 to 333 (TPPAGGSASAVSMMATGATTAGTG) has biased composition (low complexity). WW domains lie at 333 to 366 (GELP…DPRR) and 393 to 426 (GPLP…DPRL). The 335-residue stretch at 482–816 (SASDLKKRLM…VEETLGFGQE (335 aa)) folds into the HECT domain. The active-site Glycyl thioester intermediate is the C784.

It belongs to the RSP5/NEDD4 family. As to quaternary structure, interacts with creD.

The protein resides in the cytoplasm. The catalysed reaction is S-ubiquitinyl-[E2 ubiquitin-conjugating enzyme]-L-cysteine + [acceptor protein]-L-lysine = [E2 ubiquitin-conjugating enzyme]-L-cysteine + N(6)-ubiquitinyl-[acceptor protein]-L-lysine.. Its pathway is protein modification; protein ubiquitination. Its function is as follows. E3 ubiquitin-protein ligase which accepts ubiquitin from an E2 ubiquitin-conjugating enzyme in the form of a thioester and then directly transfers the ubiquitin to targeted substrates. Probably involved in the regulatory network controlling carbon source utilization. The chain is Probable E3 ubiquitin-protein ligase hulA (hulA) from Aspergillus oryzae (strain ATCC 42149 / RIB 40) (Yellow koji mold).